The chain runs to 222 residues: DNA mismatch repair protein MutH (222 aa).

Belongs to the MutH family.

It is found in the cytoplasm. Functionally, sequence-specific endonuclease that cleaves unmethylated GATC sequences. It is involved in DNA mismatch repair. The polypeptide is DNA mismatch repair protein MutH (Pasteurella multocida (strain Pm70)).